Consider the following 1005-residue polypeptide: MEKQRALVAAKDGDVATLERLLEAGALGPGITDALGAGLVHHATRAGHLDCVKFLVQRAQLPGNQRAHNGATPAHDAAATGSLAELCWLVREGGCGLQDQDASGVSPLHLAARFGHPVLVEWLLHEGHSATLETREGARPLHHAAVSGDLTCLKLLTAAHGSSVNRRTRSGASPLYLACQEGHLHLAQFLVKDCGADVHLRALDGMSALHAAAARGHYSLVVWLVTFTDIGLTARDNEGATALHFAARGGHTPILDRLLLMGTPILRDSWGGTPLHDAAENGQMECCQTLVSHHVDPSLRDEDGYTAADLAEYHGHRDCAQYLREVAQPVPLLMTPPPPPFPPPPLLATRRSLEDGRRGGPGPGNPSPMSLSPAWPGHPDQPLPREQMTSPAPPRIITSATADPEGTETALAGDTSDGLAALQLDGLPSGDIDGLVPTRDERGQPIPEWKRQVMVRKLQARLGAESSAEAQDNGGSSGPTEQAAWRYSQTHQAILGPFGELLTEDDLVYLEKQIADLQLRRRCQEYESELGRLAAELQALLPEPLVSITVNSHFLPRAPGLEVEEASIPAAEPAGSAEASEVAPGVQPLPFWCSHISRLVRSLSLLLKGVHGLVQGDEKPSTRPLQDTCREASASPPRSEAQRQIQEWGVSVRTLRGNFESASGPLCGFNPGPCEPGAQHRQCLSGCWPALPKPRSGLASGEPRPGDTEEASDSGISCEEVPSEAGAAAGPDLASLRKERIIMLFLSHWRRSAYTPALKTVACRTLGARHAGLRGQEAARSPGPPSPPSEGPRLGHLWQQRSTITHLLGNWKAIMAHVPARQLRRLSRQPRGALSPEQFLPHVDGAPVPYSSLSLDLFMLGYFQLLECDLPAEERKLRHLLCFEVFEHLGTHGWEAVRAFHKAVTDEVAAGRRAWTDGFEDIKARFFGSSQRPAWDTEPGRKSGLTLLGPLPHAAVPCSGPEPTAQRLGSRSQQGSFNGEDICGYINRSFAFWKEKEAEMFNFGE.

ANK repeat units lie at residues 1–31, 35–64, 69–99, 103–132, 136–166, 170–200, 204–234, 238–267, and 270–299; these read MEKQ…GPGI, LGAG…LPGN, NGAT…GLQD, SGVS…SATL, EGAR…SVNR, SGAS…DVHL, DGMS…GLTA, EGAT…PILR, and WGGT…DPSL. Disordered regions lie at residues 333 to 444 and 462 to 483; these read LMTP…ERGQ and LGAE…TEQA. A compositionally biased stretch (pro residues) spans 334–346; that stretch reads MTPPPPPFPPPPL. The span at 468-480 shows a compositional bias: polar residues; that stretch reads AEAQDNGGSSGPT. Residues 517–541 are a coiled coil; that stretch reads LQLRRRCQEYESELGRLAAELQALL. Disordered regions lie at residues 616-644, 695-730, and 773-795; these read GDEK…AQRQ, RSGL…AAAG, and LRGQ…PRLG.

In terms of assembly, interacts with MYO3A (via C-terminus). Interacts with MYO3B (via C-terminus).

The protein resides in the cell projection. Its subcellular location is the stereocilium. Its function is as follows. Binds to but does not cross-link actin. Required for the formation and maintenance of inner ear hair cell stereocilia and staircase formation. Essential for normal hearing. The sequence is that of Espin-like protein (ESPNL) from Homo sapiens (Human).